Here is a 595-residue protein sequence, read N- to C-terminus: Beta-hexosaminidase 1 (595 aa).

An N-terminal signal peptide occupies residues 1 to 20; sequence MRFAYLATLAGSLLAGLAQA. A glycan (N-linked (GlcNAc...) asparagine) is linked at Asn313.

This sequence belongs to the glycosyl hydrolase 20 family.

It catalyses the reaction Hydrolysis of terminal non-reducing N-acetyl-D-hexosamine residues in N-acetyl-beta-D-hexosaminides.. Beta-hexosaminidase that shows a broad substrate specificity. The polypeptide is Beta-hexosaminidase 1 (Coccidioides posadasii (strain RMSCC 757 / Silveira) (Valley fever fungus)).